The sequence spans 239 residues: tRNA (guanine-N(7)-)-methyltransferase (239 aa).

Residues Gly64, 87–88, 120–121, and Leu140 contribute to the S-adenosyl-L-methionine site; these read EI and NA. Residue Asp143 is part of the active site. Residue 218 to 220 coordinates S-adenosyl-L-methionine; the sequence is SEE.

The protein belongs to the class I-like SAM-binding methyltransferase superfamily. TrmB family.

Its subcellular location is the nucleus. The enzyme catalyses guanosine(46) in tRNA + S-adenosyl-L-methionine = N(7)-methylguanosine(46) in tRNA + S-adenosyl-L-homocysteine. It functions in the pathway tRNA modification; N(7)-methylguanine-tRNA biosynthesis. In terms of biological role, catalyzes the formation of N(7)-methylguanine at position 46 (m7G46) in tRNA. This is tRNA (guanine-N(7)-)-methyltransferase from Culex quinquefasciatus (Southern house mosquito).